A 440-amino-acid polypeptide reads, in one-letter code: Chromosomal replication initiator protein DnaA (440 aa).

The interval 1–74 (MNPSQILENL…VQSGNKAIIN (74 aa)) is domain I, interacts with DnaA modulators. Residues 74-99 (NIQAQSAKQSNKSTKIDIAHIKAQST) form a domain II region. The segment at 100–316 (ILNPSFTFDS…GIIISLNAYA (217 aa)) is domain III, AAA+ region. ATP-binding residues include G146, G148, K149, and T150. The domain IV, binds dsDNA stretch occupies residues 317 to 440 (TILGQEITLE…KNKILVKSQS (124 aa)).

It belongs to the DnaA family. As to quaternary structure, oligomerizes as a right-handed, spiral filament on DNA at oriC.

It localises to the cytoplasm. In terms of biological role, plays an essential role in the initiation and regulation of chromosomal replication. ATP-DnaA binds to the origin of replication (oriC) to initiate formation of the DNA replication initiation complex once per cell cycle. Binds the DnaA box (a 9 base pair repeat at the origin) and separates the double-stranded (ds)DNA. Forms a right-handed helical filament on oriC DNA; dsDNA binds to the exterior of the filament while single-stranded (ss)DNA is stabiized in the filament's interior. The ATP-DnaA-oriC complex binds and stabilizes one strand of the AT-rich DNA unwinding element (DUE), permitting loading of DNA polymerase. After initiation quickly degrades to an ADP-DnaA complex that is not apt for DNA replication. Binds acidic phospholipids. This chain is Chromosomal replication initiator protein DnaA, found in Campylobacter jejuni (strain RM1221).